We begin with the raw amino-acid sequence, 191 residues long: Adenylate kinase (191 aa).

10-15 is a binding site for ATP; sequence GAGKGT. An NMP region spans residues 30–59; sequence STGDMLRAARTSGTEMGNLVAGVMDRGELV. AMP contacts are provided by residues T31, R36, 57–59, 83–86, and Q90; these read ELV and GFPR. The interval 124–140 is LID; that stretch reads NRAKEAAAAGQPVRADD. R125 provides a ligand contact to ATP. AMP contacts are provided by R137 and R148. An ATP-binding site is contributed by G176.

This sequence belongs to the adenylate kinase family. As to quaternary structure, monomer.

Its subcellular location is the cytoplasm. It carries out the reaction AMP + ATP = 2 ADP. Its pathway is purine metabolism; AMP biosynthesis via salvage pathway; AMP from ADP: step 1/1. Functionally, catalyzes the reversible transfer of the terminal phosphate group between ATP and AMP. Plays an important role in cellular energy homeostasis and in adenine nucleotide metabolism. This is Adenylate kinase from Jannaschia sp. (strain CCS1).